Reading from the N-terminus, the 187-residue chain is Core-binding factor subunit beta (187 aa).

At S10 the chain carries Phosphoserine; by CK2. The disordered stretch occupies residues 139–187 (AQQAFEEARRRTREFEDRDRSHREEMEARRQQDPSPGSNLGGGDDLKLR). A compositionally biased stretch (basic and acidic residues) spans 144-170 (EEARRRTREFEDRDRSHREEMEARRQQ). S159 is modified (phosphoserine; by PKC).

It belongs to the CBF-beta family. Heterodimer with RUNX1, RUNX2 and RUNX3. Interacts with COPRS. Found in a complex with PRMT5 and RUNX1. In terms of tissue distribution, expressed in all tissues tested. Highest level in thymus, but also abundantly expressed in muscle, lung and brain.

It localises to the nucleus. Functionally, forms the heterodimeric complex core-binding factor (CBF) with RUNX family proteins (RUNX1, RUNX2, and RUNX3). RUNX members modulate the transcription of their target genes through recognizing the core consensus binding sequence 5'-TGTGGT-3', or very rarely, 5'-TGCGGT-3', within their regulatory regions via their runt domain, while CBFB is a non-DNA-binding regulatory subunit that allosterically enhances the sequence-specific DNA-binding capacity of RUNX. The heterodimers bind to the core site of a number of enhancers and promoters, including murine leukemia virus, polyomavirus enhancer, T-cell receptor enhancers, LCK, IL3 and GM-CSF promoters. CBF complexes repress ZBTB7B transcription factor during cytotoxic (CD8+) T cell development. They bind to RUNX-binding sequence within the ZBTB7B locus acting as transcriptional silencer and allowing for cytotoxic T cell differentiation. In Mus musculus (Mouse), this protein is Core-binding factor subunit beta (Cbfb).